Reading from the N-terminus, the 176-residue chain is RING-H2 finger protein ATL14 (176 aa).

The disordered stretch occupies residues 1 to 26 (MSITIPYDGSISREPSPSPPPPKANT). The helical transmembrane segment at 37 to 57 (FLIGLIMIPVAITAFIFILTS) threads the bilayer. An RING-type; atypical zinc finger spans residues 115–157 (CVVCIDGFRQGQWCRKLPRCGHVFHRKCVDLWLIKVSTCPICR).

This sequence belongs to the RING-type zinc finger family. ATL subfamily.

The protein resides in the membrane. It carries out the reaction S-ubiquitinyl-[E2 ubiquitin-conjugating enzyme]-L-cysteine + [acceptor protein]-L-lysine = [E2 ubiquitin-conjugating enzyme]-L-cysteine + N(6)-ubiquitinyl-[acceptor protein]-L-lysine.. It functions in the pathway protein modification; protein ubiquitination. The sequence is that of RING-H2 finger protein ATL14 (ATL14) from Arabidopsis thaliana (Mouse-ear cress).